We begin with the raw amino-acid sequence, 542 residues long: MFSLQKKALQHIYMTPENASQLTKDLLQHLGLYWNGPVIKMDTVVHLHNKIFSNRSVLKYALAKQANITIIKTLVLWVEPEYALAQALKHNRKDVLECIFSYHLTTPKYHHIMHLTSSQELFEFFHLFICKSKNYNARMECLLYAATLYNFPNILEKNREYIIRHSIGNTLFAIACKERHIHLIAWFVTAGVLDTYDDSTLFNTAFRLGDYSLLEVACDLPIIYPDYLIISMMQTAIQKNYFRFFKKLLTHFNIYRQIIITDAAYYNRRKILLLLLNQNVFNNFAILCALSAAIKGHASKKTLNLLISQLDSQMTVIDSVYYSIIKYNNIDCIPLLMQIKTFRLETLVSIAVHGDNIDIIAACKAFLPKDTLYHLVLKMAIISRNHKLFKLYTEKENPMYIFTTIKAIISNLVNYTVVQAVAIEYLREFHREKQLPIVPLLMVLAEHNYITKFKKACYAANMSDQKVKRALIKCLFIASQKNYCQIFKYCFGSLLKVLSKHERVKFFNSVVFAKKLASYYDHQNMIHLIDSLIERFRYLIKD.

Belongs to the asfivirus MGF 505 family.

Functionally, plays a role in virus cell tropism, and may be required for efficient virus replication in macrophages. The polypeptide is Protein MGF 505-11L (Ornithodoros (relapsing fever ticks)).